We begin with the raw amino-acid sequence, 502 residues long: Probable cytosol aminopeptidase (502 aa).

The Mn(2+) site is built by lysine 270 and aspartate 275. Lysine 282 is an active-site residue. Positions 293, 352, and 354 each coordinate Mn(2+). The active site involves arginine 356.

It belongs to the peptidase M17 family. The cofactor is Mn(2+).

The protein localises to the cytoplasm. It carries out the reaction Release of an N-terminal amino acid, Xaa-|-Yaa-, in which Xaa is preferably Leu, but may be other amino acids including Pro although not Arg or Lys, and Yaa may be Pro. Amino acid amides and methyl esters are also readily hydrolyzed, but rates on arylamides are exceedingly low.. It catalyses the reaction Release of an N-terminal amino acid, preferentially leucine, but not glutamic or aspartic acids.. In terms of biological role, presumably involved in the processing and regular turnover of intracellular proteins. Catalyzes the removal of unsubstituted N-terminal amino acids from various peptides. In Desulfotalea psychrophila (strain LSv54 / DSM 12343), this protein is Probable cytosol aminopeptidase.